A 284-amino-acid polypeptide reads, in one-letter code: Bifunctional protein FolD (284 aa).

NADP(+) contacts are provided by residues 166–168 (GAS) and Ile-232.

This sequence belongs to the tetrahydrofolate dehydrogenase/cyclohydrolase family. Homodimer.

It carries out the reaction (6R)-5,10-methylene-5,6,7,8-tetrahydrofolate + NADP(+) = (6R)-5,10-methenyltetrahydrofolate + NADPH. The enzyme catalyses (6R)-5,10-methenyltetrahydrofolate + H2O = (6R)-10-formyltetrahydrofolate + H(+). The protein operates within one-carbon metabolism; tetrahydrofolate interconversion. Catalyzes the oxidation of 5,10-methylenetetrahydrofolate to 5,10-methenyltetrahydrofolate and then the hydrolysis of 5,10-methenyltetrahydrofolate to 10-formyltetrahydrofolate. In Azotobacter vinelandii (strain DJ / ATCC BAA-1303), this protein is Bifunctional protein FolD.